The sequence spans 308 residues: Mitochondrial brown fat uncoupling protein 1 (308 aa).

Residues 1–10 (MVASAEADVP) lie on the Mitochondrial intermembrane side of the membrane. A helical transmembrane segment spans residues 11 to 33 (PPTMLVKIASAGLSACLADIITF). Solcar repeat units follow at residues 11 to 103 (PPTM…VQEY), 112 to 202 (ATLG…LKEA), and 211 to 296 (DDIP…LKKE). At 34–74 (PLDTAKVRLQVQGERPNAPGVKYKGVLGTIATVAKTEGPLK) the chain is on the mitochondrial matrix side. Lys57 serves as a coordination point for fatty acid 16:0. The chain crosses the membrane as a helical span at residues 75 to 97 (LYGGLPAGIQRQISFASLRIGLY). The Mitochondrial intermembrane segment spans residues 98 to 117 (DTVQEYFNAHRKTPATLGNK). Residues 118–134 (ISAGLMTGCVTVFIGQP) traverse the membrane as a helical segment. At 135–179 (TEVAKVRMQAQSSLHWLKPRYSGTYNAYYVIVKTEGFLGLWKGTS) the chain is on the mitochondrial matrix side. A helical transmembrane segment spans residues 180–196 (LNLTRNVIINCTELVVY). At 197–213 (DVLKEALVKNNVLADDI) the chain is on the mitochondrial intermembrane side. A helical transmembrane segment spans residues 214–233 (PCHLLAALTAGFCTTALASP). Over 234–267 (VDVVKTRFINSPPGYYPHVHNCALNMLQKEGLRA) the chain is Mitochondrial matrix. Residue Cys255 is modified to Cysteine sulfenic acid (-SOH). The helical transmembrane segment at 268 to 290 (FFKGFVPSFLRLGSWTVIMHVTF) threads the bilayer. Position 270 (Lys270) interacts with fatty acid 16:0. The Mitochondrial intermembrane portion of the chain corresponds to 291–308 (EQLKKELMKSRQTVDCAT).

The protein belongs to the mitochondrial carrier (TC 2.A.29) family. Most probably functions as a monomer. Binds one purine nucleotide per monomer. However, has also been suggested to function as a homodimer or a homotetramer. Tightly associates with cardiolipin in the mitochondrion inner membrane; may stabilize and regulate its activity. Post-translationally, may undergo sulfenylation upon cold exposure. May increase the sensitivity of UCP1 thermogenic function to the activation by noradrenaline probably through structural effects. In terms of processing, may undergo ubiquitin-mediated proteasomal degradation. Brown adipose tissue.

The protein localises to the mitochondrion inner membrane. It carries out the reaction H(+)(in) = H(+)(out). Has no constitutive proton transporter activity and has to be activated by long-chain fatty acids/LCFAs. Inhibited by purine nucleotides. Both purine nucleotides and LCFAs bind the cytosolic side of the transporter and directly compete to activate or inhibit it. Activated by noradrenaline and reactive oxygen species. Despite lacking canonical translational encoding for selenocysteine, a small pool of the protein has been observed to selectively incorporate selenocysteine at 'Cys-255'. Selenocysteine-modified protein is highly sensitive to redox modification and may constitute a pool of protein highly sensitive to activation by elevated levels of reactive oxygen species (ROS). Its function is as follows. Mitochondrial protein responsible for thermogenic respiration, a specialized capacity of brown adipose tissue and beige fat that participates in non-shivering adaptive thermogenesis to temperature and diet variations and more generally to the regulation of energy balance. Functions as a long-chain fatty acid/LCFA and proton symporter, simultaneously transporting one LCFA and one proton through the inner mitochondrial membrane. However, LCFAs remaining associated with the transporter via their hydrophobic tails, it results in an apparent transport of protons activated by LCFAs. Thereby, dissipates the mitochondrial proton gradient and converts the energy of substrate oxydation into heat instead of ATP. Regulates the production of reactive oxygen species/ROS by mitochondria. The protein is Mitochondrial brown fat uncoupling protein 1 of Suncus murinus (Asian house shrew).